We begin with the raw amino-acid sequence, 180 residues long: Negative modulator of initiation of replication (180 aa).

Interaction with DNA stretches follow at residues 86-87, 115-119, and 149-155; these read AV, RTRVY, and NTNTGRK.

Belongs to the SeqA family. Homodimer. Polymerizes to form helical filaments.

It localises to the cytoplasm. Functionally, negative regulator of replication initiation, which contributes to regulation of DNA replication and ensures that replication initiation occurs exactly once per chromosome per cell cycle. Binds to pairs of hemimethylated GATC sequences in the oriC region, thus preventing assembly of replication proteins and re-initiation at newly replicated origins. Repression is relieved when the region becomes fully methylated. The polypeptide is Negative modulator of initiation of replication (Salmonella typhimurium (strain LT2 / SGSC1412 / ATCC 700720)).